The chain runs to 137 residues: ATP synthase epsilon chain, chloroplastic (137 aa).

The protein belongs to the ATPase epsilon chain family. In terms of assembly, F-type ATPases have 2 components, CF(1) - the catalytic core - and CF(0) - the membrane proton channel. CF(1) has five subunits: alpha(3), beta(3), gamma(1), delta(1), epsilon(1). CF(0) has three main subunits: a, b and c.

The protein resides in the plastid. The protein localises to the chloroplast thylakoid membrane. In terms of biological role, produces ATP from ADP in the presence of a proton gradient across the membrane. The polypeptide is ATP synthase epsilon chain, chloroplastic (Agrostis stolonifera (Creeping bentgrass)).